Consider the following 370-residue polypeptide: Cytochrome b (370 aa).

4 helical membrane-spanning segments follow: residues Phe-25–Val-45, Trp-69–Ile-90, Trp-105–Leu-125, and Phe-170–Met-190. The heme b site is built by His-75 and His-89. Residues His-174 and His-188 each contribute to the heme b site. His-193 serves as a coordination point for a ubiquinone. Transmembrane regions (helical) follow at residues Tyr-218–Tyr-238, Leu-280–His-300, Phe-312–Thr-332, and Phe-339–Pro-358.

Belongs to the cytochrome b family. In terms of assembly, the cytochrome bc1 complex contains 3 respiratory subunits (MT-CYB, CYC1 and UQCRFS1), 2 core proteins (UQCRC1 and UQCRC2) and probably 6 low-molecular weight proteins. The cofactor is heme b.

The protein localises to the mitochondrion inner membrane. In terms of biological role, component of the ubiquinol-cytochrome c reductase complex (complex III or cytochrome b-c1 complex) that is part of the mitochondrial respiratory chain. The b-c1 complex mediates electron transfer from ubiquinol to cytochrome c. Contributes to the generation of a proton gradient across the mitochondrial membrane that is then used for ATP synthesis. The chain is Cytochrome b (MT-CYB) from Corallus hortulanus enydris (Garden tree boa).